The chain runs to 459 residues: Zinc finger protein 213 (459 aa).

One can recognise an SCAN box domain in the interval 45–126; it reads RQRFRQFCYG…VALVEDLQKQ (82 aa). Residues 128 to 188 are disordered; sequence VKAWRQDVPS…ALLKEGRPGE (61 aa). Residues 202 to 292 enclose the KRAB domain; that stretch reads VALGDIPFYF…ENRPRAALGP (91 aa). 5 C2H2-type zinc fingers span residues 317 to 339, 345 to 367, 373 to 395, 401 to 423, and 429 to 451; these read HSCG…QRTH, HKCP…QGVH, FSCS…QRIH, FGCS…RRVH, and FGCG…QSLH.

Belongs to the krueppel C2H2-type zinc-finger protein family. Widely expressed with highest levels in testis.

Its subcellular location is the nucleus. May be involved in transcriptional regulation. This Homo sapiens (Human) protein is Zinc finger protein 213 (ZNF213).